We begin with the raw amino-acid sequence, 139 residues long: Basic phospholipase A2 beta-bungarotoxin A2 chain (139 aa).

Positions 1–9 are cleaved as a signal peptide; the sequence is AVCVSLLGA. Residues 10 to 17 constitute a propeptide that is removed on maturation; it reads ANIPPHPF. 3 residues coordinate Ca(2+): Tyr45, Gly47, and Gly49. Residues Cys46 and Cys62 are joined by a disulfide bond. Residue His65 is part of the active site. Position 66 (Asp66) interacts with Ca(2+).

This sequence belongs to the phospholipase A2 family. Group I subfamily. D49 sub-subfamily. Heterodimer; disulfide-linked. The A chains have phospholipase A2 activity and the B chains show homology with the basic protease inhibitors. Ca(2+) is required as a cofactor. Expressed by the venom gland.

It is found in the secreted. The enzyme catalyses a 1,2-diacyl-sn-glycero-3-phosphocholine + H2O = a 1-acyl-sn-glycero-3-phosphocholine + a fatty acid + H(+). Functionally, snake venom phospholipase A2 (PLA2) that shows presynaptic neurotoxicity. PLA2 catalyzes the calcium-dependent hydrolysis of the 2-acyl groups in 3-sn-phosphoglycerides. This chain is Basic phospholipase A2 beta-bungarotoxin A2 chain, found in Bungarus candidus (Malayan krait).